Here is a 500-residue protein sequence, read N- to C-terminus: 4-aminobutyrate aminotransferase, mitochondrial (500 aa).

The transit peptide at 1-28 (MAFLLITRRLACSSQKNLHLFIPGSRYI) directs the protein to the mitochondrion. Cys-163 contributes to the [2Fe-2S] cluster binding site. Residue 164 to 165 (GS) participates in pyridoxal 5'-phosphate binding. Cys-166 contacts [2Fe-2S] cluster. Substrate is bound at residue Arg-220. Lys-231 carries the post-translational modification N6-succinyllysine. Residue Lys-252 is modified to N6-acetyllysine; alternate. N6-succinyllysine; alternate is present on Lys-252. N6-acetyllysine occurs at positions 279 and 318. Lys-357 carries the post-translational modification N6-(pyridoxal phosphate)lysine. Thr-381 contributes to the pyridoxal 5'-phosphate binding site. An N6-acetyllysine; alternate modification is found at Lys-413. Lys-413 is subject to N6-succinyllysine; alternate. N6-acetyllysine occurs at positions 452 and 470.

This sequence belongs to the class-III pyridoxal-phosphate-dependent aminotransferase family. As to quaternary structure, homodimer; disulfide-linked. Pyridoxal 5'-phosphate is required as a cofactor. The cofactor is [2Fe-2S] cluster.

The protein resides in the mitochondrion matrix. The enzyme catalyses 4-aminobutanoate + 2-oxoglutarate = succinate semialdehyde + L-glutamate. It catalyses the reaction (S)-3-amino-2-methylpropanoate + 2-oxoglutarate = 2-methyl-3-oxopropanoate + L-glutamate. In terms of biological role, catalyzes the conversion of gamma-aminobutyrate and L-beta-aminoisobutyrate to succinate semialdehyde and methylmalonate semialdehyde, respectively. Can also convert delta-aminovalerate and beta-alanine. The protein is 4-aminobutyrate aminotransferase, mitochondrial of Mus musculus (Mouse).